The chain runs to 208 residues: dITP/XTP pyrophosphatase (208 aa).

Residue 15 to 20 participates in substrate binding; that stretch reads SHNAGK. 2 residues coordinate Mg(2+): Glu-47 and Asp-76. Asp-76 (proton acceptor) is an active-site residue. Residues Ser-77, 157–160, Lys-180, and 185–186 each bind substrate; these read HGYD and HR.

Belongs to the HAM1 NTPase family. As to quaternary structure, homodimer. Mg(2+) is required as a cofactor.

The enzyme catalyses XTP + H2O = XMP + diphosphate + H(+). It catalyses the reaction dITP + H2O = dIMP + diphosphate + H(+). The catalysed reaction is ITP + H2O = IMP + diphosphate + H(+). In terms of biological role, pyrophosphatase that catalyzes the hydrolysis of nucleoside triphosphates to their monophosphate derivatives, with a high preference for the non-canonical purine nucleotides XTP (xanthosine triphosphate), dITP (deoxyinosine triphosphate) and ITP. Seems to function as a house-cleaning enzyme that removes non-canonical purine nucleotides from the nucleotide pool, thus preventing their incorporation into DNA/RNA and avoiding chromosomal lesions. The protein is dITP/XTP pyrophosphatase of Gluconobacter oxydans (strain 621H) (Gluconobacter suboxydans).